A 149-amino-acid polypeptide reads, in one-letter code: MSFKGRSYRSLDPKGRLMLPPEVRDALLAVSPEGRVSLTTFDGCLVAYTPEDWEKFEAGFARIKNPSRKMRDFRRLVIGGVEELCVDKQGRVKLSRAHMEYAGITKKVVIVGQGSRFEIWSEEELEAVIGQDFGDVTDELAESGVDFPI.

2 consecutive SpoVT-AbrB domains span residues 6–52 and 81–124; these read RSYR…TPED and VEEL…SEEE.

This sequence belongs to the MraZ family. Forms oligomers.

The protein resides in the cytoplasm. The protein localises to the nucleoid. This chain is Transcriptional regulator MraZ, found in Oleidesulfovibrio alaskensis (strain ATCC BAA-1058 / DSM 17464 / G20) (Desulfovibrio alaskensis).